Here is a 167-residue protein sequence, read N- to C-terminus: Ubiquitin-fold modifier-conjugating enzyme 1 (167 aa).

Residue Cys-116 is the Glycyl thioester intermediate of the active site.

This sequence belongs to the ubiquitin-conjugating enzyme family. UFC1 subfamily. Interacts with UBA5 (via C-terminus). Interacts with UFL1. Interacts with UFM1.

Its function is as follows. E2-like enzyme which specifically catalyzes the second step in ufmylation. Accepts the ubiquitin-like modifier UFM1 from the E1 enzyme UBA5 and forms an intermediate with UFM1 via a thioester linkage. Ufmylation is involved in various processes, such as ribosome recycling, response to DNA damage, interferon response or reticulophagy (also called ER-phagy). This is Ubiquitin-fold modifier-conjugating enzyme 1 from Osmerus mordax (Rainbow smelt).